A 341-amino-acid polypeptide reads, in one-letter code: HTH-type transcriptional repressor PurR (341 aa).

The region spanning 2–56 is the HTH lacI-type domain; the sequence is ATIKDVAKRANVSTTTVSHVINKTRFVAEETRNAVWAAIKELHYSPSAVARSLKV. The segment at residues 4–23 is a DNA-binding region (H-T-H motif); it reads IKDVAKRANVSTTTVSHVIN. A DNA-binding region spans residues 48–56; the sequence is SAVARSLKV. Residues Tyr73, Arg190, Thr192, Phe221, and Asp275 each contribute to the hypoxanthine site.

Homodimer.

Its pathway is purine metabolism; purine nucleotide biosynthesis [regulation]. Is the main repressor of the genes involved in the de novo synthesis of purine nucleotides, regulating purB, purC, purEK, purF, purHD, purL, purMN and guaBA expression. PurR is allosterically activated to bind its cognate DNA by binding the purine corepressors, hypoxanthine or guanine, thereby effecting transcription repression. This chain is HTH-type transcriptional repressor PurR, found in Salmonella typhi.